We begin with the raw amino-acid sequence, 162 residues long: Endoribonuclease YbeY (162 aa).

Positions 118, 122, and 128 each coordinate Zn(2+).

This sequence belongs to the endoribonuclease YbeY family. Zn(2+) serves as cofactor.

It is found in the cytoplasm. In terms of biological role, single strand-specific metallo-endoribonuclease involved in late-stage 70S ribosome quality control and in maturation of the 3' terminus of the 16S rRNA. The protein is Endoribonuclease YbeY of Caulobacter sp. (strain K31).